A 261-amino-acid chain; its full sequence is 5'-nucleotidase SurE (261 aa).

The a divalent metal cation site is built by aspartate 12, aspartate 13, serine 43, and asparagine 99.

This sequence belongs to the SurE nucleotidase family. A divalent metal cation serves as cofactor.

It is found in the cytoplasm. It carries out the reaction a ribonucleoside 5'-phosphate + H2O = a ribonucleoside + phosphate. Its function is as follows. Nucleotidase that shows phosphatase activity on nucleoside 5'-monophosphates. This chain is 5'-nucleotidase SurE, found in Polynucleobacter asymbioticus (strain DSM 18221 / CIP 109841 / QLW-P1DMWA-1) (Polynucleobacter necessarius subsp. asymbioticus).